Reading from the N-terminus, the 964-residue chain is MDAPSAGYAFEYLIETLNDSSHKKFFNVPRLGGTKYDVLPYSIRVLLEAAVRNCDGFLMKKEDVMNILDWKTKQSNVEVPFFPGRVLLQDFTGIPAMVDFAAMREAVKTLGGDPKKVHPACPTDLTVDHSLQIDFNKCAIQNAPNPGGGDLQKAGKLSPLRVQPKKLPCRGQTACRGSCDSGDLGRNSGKFSSQIENTPILCPFHLQPVPEPETVLKNQEVEFGRNRERLQFFKWSSRVFKNVAVIPPGTGMAHQVNLEYLSRVVFEEKDLLFPDSVVGTDSHITMVNGLGILGWGVGGIETEAVMLGLPVSLTLPEVVGCELTGSSNPFVTSIDVVLGITKHLRQIGVAGKFVEFFGSGVSQLSIVDRTTIANMCPEYGAILSFFPVDNVTLKHLEYTGFNKAKLKSMETYLKAVKLFRNDQDNSGEPEYSQVIQINLNSIVPSVSGPKRPQDRVAVTDMKSDFQACLNEKVGFKGFQIAAEKQNDTVSIHYEGSEYKLSHGSVVIAAVISCTNNCNPSVMLAAGLLAKKAVEAGLRVKPYIRTSLSPGSGMVTHYLSSSGVLPYLSKLGFEIVGYGCSTCVGNTAPLSEAVLNAVKQGDLVTCGVLSGNKNFEGRLCDCVRANYLASPPLVVAYAIAGTVNIDFRTEPLGTDPTGKNIYLHDIWPSREEVHQIEEEHVVLSMFKALKEKIEMGNKRWNSLEAPDSVLFPWDLKSTYIRCPSFFDKLTKEPVALQPIENAHVLLYLGDSVTTDHISPAGSIARSSAAAKYLTNRGLTPREFNSYGARRGNDAVMTRGTFANIKLFNKFIGKPAPKTIHFPSGQTLDVFEAAELYQKEGIPLIILAGKKYGSGNSRDWAAKGPYLLGVKAVLAESYEKIHKDHLIGIGIAPLQFLPGENADSLGLSGRETFSLTFPEELSPGVTLNIKTSTGKIFSVIASFENDVEIILYKHGGLLNFVARKFS.

Residues cysteine 513, cysteine 579, and cysteine 582 each contribute to the [4Fe-4S] cluster site.

The protein belongs to the aconitase/IPM isomerase family. Interacts with RBCK1 only in iron-rich conditions. Interacts (when associated with the 4Fe-4S) with FBXL5. Interacts with CIAO1 and CIAO2A. Requires [4Fe-4S] cluster as cofactor. Post-translationally, ubiquitinated and degraded by the proteasome in presence of high level of iron and oxygen. Ubiquitinated by a SCF complex containing FBXL5. Upon iron and oxygen depletion FBXL5 is degraded, preventing ubiquitination and allowing its RNA-binding activity.

The protein resides in the cytoplasm. In terms of biological role, RNA-binding protein that binds to iron-responsive elements (IRES), which are stem-loop structures found in the 5'-UTR of ferritin, and delta aminolevulinic acid synthase mRNAs, and in the 3'-UTR of transferrin receptor mRNA. Binding to the IRE element in ferritin results in the repression of its mRNA translation. Binding of the protein to the transferrin receptor mRNA inhibits the degradation of this otherwise rapidly degraded mRNA. The chain is Iron-responsive element-binding protein 2 (IREB2) from Sus scrofa (Pig).